Reading from the N-terminus, the 179-residue chain is Large ribosomal subunit protein uL5 (179 aa).

Belongs to the universal ribosomal protein uL5 family. Part of the 50S ribosomal subunit; part of the 5S rRNA/L5/L18/L25 subcomplex. Contacts the 5S rRNA and the P site tRNA. Forms a bridge to the 30S subunit in the 70S ribosome.

Its function is as follows. This is one of the proteins that bind and probably mediate the attachment of the 5S RNA into the large ribosomal subunit, where it forms part of the central protuberance. In the 70S ribosome it contacts protein S13 of the 30S subunit (bridge B1b), connecting the 2 subunits; this bridge is implicated in subunit movement. Contacts the P site tRNA; the 5S rRNA and some of its associated proteins might help stabilize positioning of ribosome-bound tRNAs. The polypeptide is Large ribosomal subunit protein uL5 (Rickettsia bellii (strain OSU 85-389)).